Reading from the N-terminus, the 1006-residue chain is Zinc finger protein ZFPM1 (1006 aa).

Basic residues predominate over residues Met1–Lys13. 2 disordered regions span residues Met1–Glu93 and Ser114–Glu133. The segment covering Ser15–Val25 has biased composition (basic and acidic residues). Over residues Ala42–Pro62 the composition is skewed to pro residues. Positions Lys66 to Glu79 are enriched in basic and acidic residues. A phosphoserine mark is found at Ser84 and Ser128. The segment covering Ser121–Arg130 has biased composition (polar residues). Residues Val235–Gln268 form a CCHC FOG-type 1 zinc finger. Residues Cys243, Cys246, His259, and Cys264 each contribute to the Zn(2+) site. Phosphoserine is present on Ser272. 3 consecutive C2H2-type zinc fingers follow at residues Arg290–His314, Phe320–His342, and Gly348–His371. An interaction with TACC3 region spans residues Thr330–Val341. Phosphoserine is present on Ser384. Disordered regions lie at residues Ser384–Leu409, Asn438–Arg460, and Ala473–Pro515. The span at Ala485–Pro515 shows a compositional bias: low complexity. A phosphoserine mark is found at Ser491 and Ser494. A CCHC FOG-type 2 zinc finger spans residues Pro571 to Arg604. The Zn(2+) site is built by Cys579, Cys582, His595, and Cys600. Positions Ala605–Ser681 are disordered. The segment covering Ala617–Pro629 has biased composition (pro residues). Phosphoserine occurs at positions 638 and 671. Residues Glu677–His710 form a CCHC FOG-type 3 zinc finger. Residues Cys685, Cys688, His701, and Cys706 each contribute to the Zn(2+) site. Residues Ser708–Ala810 form a disordered region. Composition is skewed to pro residues over residues Arg715–Ala735 and Ala754–Pro769. A compositionally biased stretch (low complexity) spans Gly780–Ala791. Ser786 is modified (phosphoserine). The tract at residues Pro794 to Lys800 is interaction with CTBP2. The CCHC FOG-type 4 zinc finger occupies Pro811 to Pro844. 4 residues coordinate Zn(2+): Cys819, Cys822, His835, and Cys840. Residues Ala854–His877 form a C2H2-type 4 zinc finger. The tract at residues Gly889–Gly971 is disordered. Ser901, Ser909, Ser914, and Ser935 each carry phosphoserine. Pro residues predominate over residues Pro925–Pro950. Residues Leu968–Ala1001 form a CCHC FOG-type 5 zinc finger. Positions 976, 979, 992, and 997 each coordinate Zn(2+).

It belongs to the FOG (Friend of GATA) family. As to quaternary structure, interacts with corepressor CTBP2; this interaction is however not essential for corepressor activity. Interacts with the N-terminal zinc-finger of GATA1, GATA2 and probably GATA3. Mainly expressed in hematopoietic tissues. Also expressed in adult cerebellum, stomach, lymph node, liver and pancreas. Expressed in fetal heart, liver and spleen.

The protein localises to the nucleus. In terms of biological role, transcription regulator that plays an essential role in erythroid and megakaryocytic cell differentiation. Essential cofactor that acts via the formation of a heterodimer with transcription factors of the GATA family GATA1, GATA2 and GATA3. Such heterodimer can both activate or repress transcriptional activity, depending on the cell and promoter context. The heterodimer formed with GATA proteins is essential to activate expression of genes such as NFE2, ITGA2B, alpha- and beta-globin, while it represses expression of KLF1. May be involved in regulation of some genes in gonads. May also be involved in cardiac development, in a non-redundant way with ZFPM2/FOG2. This chain is Zinc finger protein ZFPM1 (ZFPM1), found in Homo sapiens (Human).